The following is a 262-amino-acid chain: Indole-3-glycerol phosphate synthase (262 aa).

This sequence belongs to the TrpC family.

The catalysed reaction is 1-(2-carboxyphenylamino)-1-deoxy-D-ribulose 5-phosphate + H(+) = (1S,2R)-1-C-(indol-3-yl)glycerol 3-phosphate + CO2 + H2O. Its pathway is amino-acid biosynthesis; L-tryptophan biosynthesis; L-tryptophan from chorismate: step 4/5. This Leptothrix cholodnii (strain ATCC 51168 / LMG 8142 / SP-6) (Leptothrix discophora (strain SP-6)) protein is Indole-3-glycerol phosphate synthase.